A 1845-amino-acid polypeptide reads, in one-letter code: Proteasome adapter and scaffold protein ECM29 (1845 aa).

Residue alanine 2 is modified to N-acetylalanine. HEAT repeat units follow at residues 28–65 (TDEQ…LVHL), 107–144 (YPRL…LIPT), 162–205 (NLAE…QGSS), 326–362 (RDPV…YDGL), 387–426 (PEIK…VGKL), 429–466 (RMPH…LSMM), 469–507 (AYST…ASTV), 683–720 (YPEK…YSVV), 721–759 (VSTV…LGFT), 783–820 (TLPD…LGEI), 829–868 (PSEG…LGYF), 870–907 (VGDG…ITSA), 931–969 (AGAK…LLSL), 975–1012 (THKE…LGLV), 1013–1050 (YELG…VVFQ), 1112–1149 (AGEQ…WNAL), 1152–1189 (DKSM…LNDL), 1194–1231 (PLDD…LKTL), 1243–1281 (KGAA…LVKI), 1285–1323 (AGAM…TEQE), 1348–1386 (LQYL…IVSL), 1390–1427 (CPQD…MGHL), 1517–1554 (SFGG…MASI), 1558–1595 (TSSL…IACV), 1605–1642 (KSVP…AADI), 1646–1683 (TKED…ENEK), and 1779–1822 (TYSS…LATM). The segment covering 193–207 (QSRQNSSSAQGSSSN) has biased composition (low complexity). The tract at residues 193–217 (QSRQNSSSAQGSSSNSGGGSGIPQP) is disordered. Position 830 is a phosphoserine (serine 830). Position 836 is a phosphothreonine (threonine 836). Lysine 1039 is covalently cross-linked (Glycyl lysine isopeptide (Lys-Gly) (interchain with G-Cter in SUMO1)).

It belongs to the ECM29 family. As to quaternary structure, non-stoichiometric component of the proteasome; associates with the 26S proteasome. Interacts (via N-terminus) with VPS11, VPS26A, VPS36, RAB11FIP4 and RABEP1. Interacts (via C-terminus) with DCTN1, DCTN2, KIF5B, MYH7, MYH10, MYO10 and ARF6.

Its subcellular location is the endoplasmic reticulum. It localises to the endoplasmic reticulum-Golgi intermediate compartment. The protein resides in the endosome. The protein localises to the cytoplasm. It is found in the cytoskeleton. Its subcellular location is the microtubule organizing center. It localises to the centrosome. The protein resides in the nucleus. The protein localises to the multivesicular body. It is found in the cytoplasmic vesicle. Adapter/scaffolding protein that binds to the 26S proteasome, motor proteins and other compartment specific proteins. May couple the proteasome to different compartments including endosome, endoplasmic reticulum and centrosome. May play a role in ERAD and other enhanced proteolysis. Promotes proteasome dissociation under oxidative stress. This Homo sapiens (Human) protein is Proteasome adapter and scaffold protein ECM29.